The chain runs to 485 residues: Probable high-affinity nitrate transporter 2.4 (485 aa).

12 helical membrane passes run 56–76, 80–100, 119–139, 147–167, 177–197, 215–235, 270–290, 305–327, 341–361, 377–397, 405–425, and 435–455; these read WMSLFACFFAAFAAPPILPAM, LVLAPSDASAAAVASLSATLV, GVASLVCALALALAAVFASSP, FVAGLSLANFVANQHWMSRIF, AVAAGWANVGSAAAQVVMPVA, VTYLLPCAMLVTTGLAVLAFP, AWLLGLTYGHCYGVELIMENV, AAGAAAACFGAMNAVARPAGGVA, LWALWAVQSAGAALCVLVGRM, VACAAFVQAASGLTFGIVPFV, VSGMTASGGAVGAIVTNRLFF, and AISCTGITSLLCTLPVALIHF.

The protein belongs to the major facilitator superfamily. Nitrate/nitrite porter (TC 2.A.1.8) family. In terms of tissue distribution, expressed in the base of the lateral root primordia, root-shoot junction zone, leaves, ends of the husk and vascular tissue of the anthers.

It localises to the cell membrane. Involved in nitrate transport. The polypeptide is Probable high-affinity nitrate transporter 2.4 (NRT2.4) (Oryza sativa subsp. japonica (Rice)).